A 1337-amino-acid chain; its full sequence is MTPEASANWFSLCWFAWIDPILTAGYTRPMEKDDLYLLQPHRCSEHLGSQLLAALEKRRKQRQDYVEANPNKTDKPAKIPPLMWAMNDIVFRYFWIGGLLKLLADVGTITSPLLVRALINFGRDSYNLRGDRDQAPNLGSGVGLAIGLFLVQALCVFLNVHAFNRGFGTGIILRGALIQAIFQRGMNLSTRARTVGGLGVSKLVTLISADATRIDYAGQFFHMAWTSAVQIIICVALLIWSLSYSALPGIAVLVLMSPIQTAITKRLFALRKKSMVWTDKRNKAVNEVVGGIRVVKQFAWEEPYSVRIAELRRKEMSFHRVRLYLRSLNLALAFATPTIATVLSFVTYALVGNELDAAILFSSLSFFTLLRTPLQFLPIAWNAIVDAKNAADRIEKVFDAEIQRDQIIRDCSATNGIQLEDASFTWETAQAADTAKPVNEKKGQDSPSNEKETPVDRASTLDSLNLTVPRGTLCAIVGGVGSGKSSLISALAGEMRQIAGKVTLSGSTAVCAQTAWIQSTTIRNNIVFGNAFDPERYRYVLEVCCLLPDLDTLADGDQTIVGEKGVSLSGGQKQRLNIARALYHNSEIVLLDDCLSALDARVGADIFANVIAGDAMAGKTRLLVTHSLNVLRSCDWIVHMEEGRITEQGTYAELVESKGRVAELLLTHTKDHFEEEKKEPSKHPIDEIQETAESILDAGSASNRNSEASESTTTTVNAESKDTSNAEGVTNKTEKKDLVAPPAQAKSKALMQDEERFSGSVSRTTYLSYLNAAPLSILLPLFLVAVLVFQGSTIMSPVWLLWWQNGHFGLQQGVYMGIYAVFGITQSLGLLSMGVIFSTFTIKSATTLHHRALQRVLHAPFSFFDTTPQGRITHRFSKDMDTLDNIIGEAMRTLIGTIVQVIGSIVLIAILTPYFLIPVAVILVLYFWIAAYYRSTARELRRIDAGLRSNMHEHFSESLHGLVTIRAFGNVDAFIAENCRRIDKQNRAYWLAQTCQRWLSVRLDFLGSLLILSVAILVVASRFDISPGETGVALSYILTAQSIFGWMIRHAAELENNMSAVERVLHYANHIEQEKPYHIPQVDDALEAREWPERGEIRFEGVEAKYGSSERNVLDKLDLHIAPGEKIAFCGRTGAGKSTLVTTLLRTLELSAGTITIDGIDIASMGLHRLRSSLSLIPQDAVIYSGTLRYNLDPLDQHEDATLHDALQRTSLTDLSLDMTITEEGGNLSAGQRSLISLARAMVRKTRIVILDEATASIDQETDVQIQEVLRNEFDGITTLTVAHRIQTILHSDRVCVLDKGVIVEIGSPAELWAKEKGAFRALCDSANIRYQDGEWK.

An N-terminal signal peptide occupies residues 1-23 (MTPEASANWFSLCWFAWIDPILT). N-linked (GlcNAc...) asparagine glycosylation is present at N71. 2 helical membrane-spanning segments follow: residues 94-114 (FWIGGLLKLLADVGTITSPLL) and 138-158 (LGSGVGLAIGLFLVQALCVFL). The ABC transmembrane type-1 1 domain maps to 95-386 (WIGGLLKLLA…LPIAWNAIVD (292 aa)). A glycan (N-linked (GlcNAc...) asparagine) is linked at N187. Transmembrane regions (helical) follow at residues 220 to 242 (FFHMAWTSAVQIIICVALLIWSL), 247 to 269 (LPGIAVLVLMSPIQTAITKRLFA), 331 to 351 (ALAFATPTIATVLSFVTYALV), and 359 to 379 (ILFSSLSFFTLLRTPLQFLPI). Residues 417–667 (IQLEDASFTW…KGRVAELLLT (251 aa)) enclose the ABC transporter 1 domain. Residues 432–460 (ADTAKPVNEKKGQDSPSNEKETPVDRAST) are disordered. The segment covering 438–455 (VNEKKGQDSPSNEKETPV) has biased composition (basic and acidic residues). N465 is a glycosylation site (N-linked (GlcNAc...) asparagine). 478–485 (GGVGSGKS) is an ATP binding site. Residues 699 to 751 (GSASNRNSEASESTTTTVNAESKDTSNAEGVTNKTEKKDLVAPPAQAKSKALM) form a disordered region. The span at 700–718 (SASNRNSEASESTTTTVNA) shows a compositional bias: low complexity. N-linked (GlcNAc...) asparagine glycosylation occurs at N731. 6 helical membrane passes run 769-789 (YLNAAPLSILLPLFLVAVLVF), 817-837 (GIYAVFGITQSLGLLSMGVIF), 890-909 (AMRTLIGTIVQVIGSIVLIA), 915-933 (FLIPVAVILVLYFWIAAYY), 999-1019 (LSVRLDFLGSLLILSVAILVV), and 1028-1048 (GETGVALSYILTAQSIFGWMI). In terms of domain architecture, ABC transmembrane type-1 2 spans 781 to 1056 (LFLVAVLVFQ…MIRHAAELEN (276 aa)). N-linked (GlcNAc...) asparagine glycosylation occurs at N1057. In terms of domain architecture, ABC transporter 2 spans 1097 to 1325 (IRFEGVEAKY…EKGAFRALCD (229 aa)). 1131–1138 (GRTGAGKS) is an ATP binding site. The N-linked (GlcNAc...) asparagine glycan is linked to N1227.

This sequence belongs to the ABC transporter superfamily. ABCC family. Conjugate transporter (TC 3.A.1.208) subfamily.

Its subcellular location is the membrane. Multidrug resistance protein; part of the gene cluster that mediates the biosynthesis of siderophore ferrichrome A which is contributing to organismal virulence. This is Multidrug resistance protein fer6 from Mycosarcoma maydis (Corn smut fungus).